The primary structure comprises 115 residues: MKTIIVFLSLLVLATKFGDAKEGVNQKQKKEVTQNEFREEYLNEMAAMSLVQQLEAIERALFENEAGRNSRQKRCLGENVPCGDNIPCCGKLSCEKTFGYPWWYKSPYCVKPSSG.

Residues 1-20 form the signal peptide; it reads MKTIIVFLSLLVLATKFGDA. The propeptide occupies 21–74; it reads KEGVNQKQKKEVTQNEFREEYLNEMAAMSLVQQLEAIERALFENEAGRNSRQKR. 3 disulfides stabilise this stretch: cysteine 75/cysteine 89, cysteine 82/cysteine 94, and cysteine 88/cysteine 109.

Belongs to the neurotoxin 14 (magi-1) family. 03 (ICK-30-40) subfamily. As to expression, expressed by the venom gland.

The protein localises to the secreted. Ion channel inhibitor. This is U17-barytoxin-Tl1c from Trittame loki (Brush-footed trapdoor spider).